Consider the following 169-residue polypeptide: CKLF-like MARVEL transmembrane domain-containing protein 2A (169 aa).

The next 4 helical transmembrane spans lie at 40 to 60 (FWLS…ISAL), 69 to 89 (HPVL…FIFL), 98 to 118 (IPFV…CVFL), and 136 to 156 (YLTA…DMLL). Positions 40 to 162 (FWLSGHAVFK…DMLLQFQHFR (123 aa)) constitute an MARVEL domain.

The protein belongs to the chemokine-like factor family.

Its subcellular location is the membrane. The sequence is that of CKLF-like MARVEL transmembrane domain-containing protein 2A (Cmtm2a) from Mus musculus (Mouse).